Here is a 334-residue protein sequence, read N- to C-terminus: Methionyl-tRNA formyltransferase (334 aa).

111–114 (SLLP) lines the (6S)-5,6,7,8-tetrahydrofolate pocket.

The protein belongs to the Fmt family.

It catalyses the reaction L-methionyl-tRNA(fMet) + (6R)-10-formyltetrahydrofolate = N-formyl-L-methionyl-tRNA(fMet) + (6S)-5,6,7,8-tetrahydrofolate + H(+). Its function is as follows. Attaches a formyl group to the free amino group of methionyl-tRNA(fMet). The formyl group appears to play a dual role in the initiator identity of N-formylmethionyl-tRNA by promoting its recognition by IF2 and preventing the misappropriation of this tRNA by the elongation apparatus. The protein is Methionyl-tRNA formyltransferase of Cyanothece sp. (strain PCC 7425 / ATCC 29141).